A 168-amino-acid polypeptide reads, in one-letter code: Photosystem I assembly protein Ycf3 (168 aa).

3 TPR repeats span residues 35 to 68, 72 to 105, and 120 to 153; these read AFAY…EIDP, SYIL…NPFL, and GEQA…TPGN.

It belongs to the Ycf3 family.

The protein localises to the plastid. Its subcellular location is the chloroplast thylakoid membrane. Functionally, essential for the assembly of the photosystem I (PSI) complex. May act as a chaperone-like factor to guide the assembly of the PSI subunits. The polypeptide is Photosystem I assembly protein Ycf3 (Morus indica (Mulberry)).